A 142-amino-acid chain; its full sequence is Holo-[acyl-carrier-protein] synthase (142 aa).

Mg(2+)-binding residues include D8 and E57.

The protein belongs to the P-Pant transferase superfamily. AcpS family. Mg(2+) is required as a cofactor.

It is found in the cytoplasm. It catalyses the reaction apo-[ACP] + CoA = holo-[ACP] + adenosine 3',5'-bisphosphate + H(+). Its function is as follows. Transfers the 4'-phosphopantetheine moiety from coenzyme A to a Ser of acyl-carrier-protein. In Ruegeria sp. (strain TM1040) (Silicibacter sp.), this protein is Holo-[acyl-carrier-protein] synthase.